An 83-amino-acid chain; its full sequence is Large ribosomal subunit protein bL27 (83 aa).

Residues 1–26 (MAHKKAGGSSKNGRDSRGQRRGVKRF) are disordered.

This sequence belongs to the bacterial ribosomal protein bL27 family.

The protein is Large ribosomal subunit protein bL27 of Desulfosudis oleivorans (strain DSM 6200 / JCM 39069 / Hxd3) (Desulfococcus oleovorans).